The primary structure comprises 327 residues: Methionyl-tRNA formyltransferase (327 aa).

(6S)-5,6,7,8-tetrahydrofolate is bound at residue Ser-122–Pro-125.

It belongs to the Fmt family.

The enzyme catalyses L-methionyl-tRNA(fMet) + (6R)-10-formyltetrahydrofolate = N-formyl-L-methionyl-tRNA(fMet) + (6S)-5,6,7,8-tetrahydrofolate + H(+). Functionally, attaches a formyl group to the free amino group of methionyl-tRNA(fMet). The formyl group appears to play a dual role in the initiator identity of N-formylmethionyl-tRNA by promoting its recognition by IF2 and preventing the misappropriation of this tRNA by the elongation apparatus. The chain is Methionyl-tRNA formyltransferase from Ralstonia nicotianae (strain ATCC BAA-1114 / GMI1000) (Ralstonia solanacearum).